Consider the following 383-residue polypeptide: 8-amino-7-oxononanoate synthase (383 aa).

Arginine 20 serves as a coordination point for substrate. A pyridoxal 5'-phosphate-binding site is contributed by 107 to 108 (GY). Residue histidine 132 coordinates substrate. Pyridoxal 5'-phosphate-binding residues include serine 178, histidine 206, and threonine 233. Lysine 236 bears the N6-(pyridoxal phosphate)lysine mark. Threonine 349 provides a ligand contact to substrate.

This sequence belongs to the class-II pyridoxal-phosphate-dependent aminotransferase family. BioF subfamily. As to quaternary structure, homodimer. The cofactor is pyridoxal 5'-phosphate.

The enzyme catalyses 6-carboxyhexanoyl-[ACP] + L-alanine + H(+) = (8S)-8-amino-7-oxononanoate + holo-[ACP] + CO2. It participates in cofactor biosynthesis; biotin biosynthesis. Catalyzes the decarboxylative condensation of pimeloyl-[acyl-carrier protein] and L-alanine to produce 8-amino-7-oxononanoate (AON), [acyl-carrier protein], and carbon dioxide. This Chromobacterium violaceum (strain ATCC 12472 / DSM 30191 / JCM 1249 / CCUG 213 / NBRC 12614 / NCIMB 9131 / NCTC 9757 / MK) protein is 8-amino-7-oxononanoate synthase.